We begin with the raw amino-acid sequence, 154 residues long: Interleukin-2 (154 aa).

The first 20 residues, 1 to 20 (MYKMQLLSCIALTLALVANG), serve as a signal peptide directing secretion. Thr-23 carries O-linked (GalNAc...) threonine glycosylation. Cys-78 and Cys-126 are joined by a disulfide.

It belongs to the IL-2 family.

The protein localises to the secreted. Cytokine produced by activated CD4-positive helper T-cells and to a lesser extend activated CD8-positive T-cells and natural killer (NK) cells that plays pivotal roles in the immune response and tolerance. Binds to a receptor complex composed of either the high-affinity trimeric IL-2R (IL2RA/CD25, IL2RB/CD122 and IL2RG/CD132) or the low-affinity dimeric IL-2R (IL2RB and IL2RG). Interaction with the receptor leads to oligomerization and conformation changes in the IL-2R subunits resulting in downstream signaling starting with phosphorylation of JAK1 and JAK3. In turn, JAK1 and JAK3 phosphorylate the receptor to form a docking site leading to the phosphorylation of several substrates including STAT5. This process leads to activation of several pathways including STAT, phosphoinositide-3-kinase/PI3K and mitogen-activated protein kinase/MAPK pathways. Functions as a T-cell growth factor and can increase NK-cell cytolytic activity as well. Promotes strong proliferation of activated B-cells and subsequently immunoglobulin production. Plays a pivotal role in regulating the adaptive immune system by controlling the survival and proliferation of regulatory T-cells, which are required for the maintenance of immune tolerance. Moreover, participates in the differentiation and homeostasis of effector T-cell subsets, including Th1, Th2, Th17 as well as memory CD8-positive T-cells. This chain is Interleukin-2 (IL2), found in Delphinapterus leucas (Beluga whale).